Reading from the N-terminus, the 347-residue chain is tRNA N6-adenosine threonylcarbamoyltransferase (347 aa).

Positions 115 and 119 each coordinate Fe cation. Substrate is bound by residues 137–141 (LASGG), Asp170, Gly183, and Asn281. Fe cation is bound at residue Asp309.

Belongs to the KAE1 / TsaD family. It depends on Fe(2+) as a cofactor.

It is found in the cytoplasm. It carries out the reaction L-threonylcarbamoyladenylate + adenosine(37) in tRNA = N(6)-L-threonylcarbamoyladenosine(37) in tRNA + AMP + H(+). Required for the formation of a threonylcarbamoyl group on adenosine at position 37 (t(6)A37) in tRNAs that read codons beginning with adenine. Is involved in the transfer of the threonylcarbamoyl moiety of threonylcarbamoyl-AMP (TC-AMP) to the N6 group of A37, together with TsaE and TsaB. TsaD likely plays a direct catalytic role in this reaction. The protein is tRNA N6-adenosine threonylcarbamoyltransferase of Methylorubrum populi (strain ATCC BAA-705 / NCIMB 13946 / BJ001) (Methylobacterium populi).